The following is a 304-amino-acid chain: Probable solute-binding protein AdeT1 (304 aa).

Belongs to the bacterial solute-binding protein 7 family.

Mediates antimicrobial resistance via active efflux. Contributes to resistance to antibiotics such as chloramphenicol, erythromycin and novobiocin. May be part of a tripartite ATP-independent periplasmic (TRAP) transport system. The polypeptide is Probable solute-binding protein AdeT1 (Acinetobacter baumannii).